The primary structure comprises 305 residues: Oxygen-dependent coproporphyrinogen-III oxidase (305 aa).

S98 contacts substrate. A divalent metal cation is bound by residues H102 and H112. H112 (proton donor) is an active-site residue. Residue 114–116 (NVR) participates in substrate binding. Positions 151 and 181 each coordinate a divalent metal cation. The interval 246–281 (YVEFNLVYDRGTLFGLQSGGRTESILMSMPPLARWE) is important for dimerization. Position 264-266 (264-266 (GGR)) interacts with substrate.

It belongs to the aerobic coproporphyrinogen-III oxidase family. In terms of assembly, homodimer. A divalent metal cation serves as cofactor.

The protein resides in the cytoplasm. The catalysed reaction is coproporphyrinogen III + O2 + 2 H(+) = protoporphyrinogen IX + 2 CO2 + 2 H2O. It functions in the pathway porphyrin-containing compound metabolism; protoporphyrin-IX biosynthesis; protoporphyrinogen-IX from coproporphyrinogen-III (O2 route): step 1/1. Functionally, involved in the heme biosynthesis. Catalyzes the aerobic oxidative decarboxylation of propionate groups of rings A and B of coproporphyrinogen-III to yield the vinyl groups in protoporphyrinogen-IX. This Vibrio atlanticus (strain LGP32) (Vibrio splendidus (strain Mel32)) protein is Oxygen-dependent coproporphyrinogen-III oxidase.